A 261-amino-acid polypeptide reads, in one-letter code: 14-3-3 protein 8 (261 aa).

A disordered region spans residues 237–261; that stretch reads DIPEDGEEAPKGDAANKVGAGEDAE.

The protein belongs to the 14-3-3 family. In terms of assembly, homodimer.

The protein is 14-3-3 protein 8 (TFT8) of Solanum lycopersicum (Tomato).